The chain runs to 1298 residues: Outer capsid protein VP1 (1298 aa).

The protein belongs to the aquareoviridae outer capsid VP1 protein family.

Its subcellular location is the virion. The catalysed reaction is a 5'-end diphospho-ribonucleoside in mRNA + GTP + H(+) = a 5'-end (5'-triphosphoguanosine)-ribonucleoside in mRNA + diphosphate. It catalyses the reaction a 5'-end (5'-triphosphoguanosine)-ribonucleoside in mRNA + S-adenosyl-L-methionine = a 5'-end (N(7)-methyl 5'-triphosphoguanosine)-ribonucleoside in mRNA + S-adenosyl-L-homocysteine. In terms of biological role, outer capsid protein involved in mRNA capping. Catalyzes the last 3 enzymatic activities for formation of the 5' cap structure on the viral plus-strand transcripts, namely the RNA guanylyltransferase, RNA-7N- and RNA-2'O-methyltransferase activities. The protein is Outer capsid protein VP1 (S1) of Ctenopharyngodon idella (Grass carp).